Consider the following 252-residue polypeptide: 3-dehydroquinate dehydratase (252 aa).

3-dehydroquinate contacts are provided by residues S21, 46-48 (EWR), and R82. The Proton donor/acceptor role is filled by H143. The Schiff-base intermediate with substrate role is filled by K170. 3 residues coordinate 3-dehydroquinate: R213, S232, and Q236.

Belongs to the type-I 3-dehydroquinase family. Homodimer.

It catalyses the reaction 3-dehydroquinate = 3-dehydroshikimate + H2O. It participates in metabolic intermediate biosynthesis; chorismate biosynthesis; chorismate from D-erythrose 4-phosphate and phosphoenolpyruvate: step 3/7. Functionally, involved in the third step of the chorismate pathway, which leads to the biosynthesis of aromatic amino acids. Catalyzes the cis-dehydration of 3-dehydroquinate (DHQ) and introduces the first double bond of the aromatic ring to yield 3-dehydroshikimate. The protein is 3-dehydroquinate dehydratase of Escherichia coli O8 (strain IAI1).